The chain runs to 675 residues: MGRRRRFTQQSTSDDDDDKAAAEPPKTAKPAVPSSSGAKKQPRRHADEEEDEDEEDELELEDEEDDEKDLEEMRRNEEEERREETRTRRRRGRKPKRAVEESDEEPEEKKAESDEEEEEEVREEDSTEAVPVGDPVKVTGKGKKQRKHYASFEYEGNTFELEDPVLLTPEQKNEKPYVAIIKDITEYDGSLSVTGQWFYRPEEADKKGGGNWTASDTRELFYSFHIDDVPAESVMHKCVVHFIPLNKKIPSRKEHPGFIVQKVYDTVAKKLWNLTDKDYEDNKQHEIDLLVKKTMDRIGELPDREPTDTPGDNTDQFPNKRGLRKRPMNPIDVSRDATGKSEHFVKPETPGSDNLKHYAILAKFKVLTTATYRDKWLDKLLDTIPLTSNEGAGAAHADPVSVAKISNNGSSALDTSSVDNENSYAPDVVVSIMASLEKSTYDSLGSDFQKYNQKMRKLEFNIKNSPVLRTRLMNKELDPPVLLTMSPAELKAGLTPAEKTSEPEESRRLQMTDARCERCTEKKVGISDIIHAGHGDRYQLECISCGHTWFSSRDAISSLTVDAPSTGGNVGTAPWATAKFDVLQKQLASPRDQPDNKPGTDALQKSTAPSMPKLEKQKSFTKPKPEEPSAPTLEKQISFTKSKLDEPFVPTTLIKQKSFPKPKSQEPSARSADHE.

The interval 1 to 143 is disordered; sequence MGRRRRFTQQ…DPVKVTGKGK (143 aa). The segment covering 22–31 has biased composition (low complexity); it reads AEPPKTAKPA. Residues 48–70 are compositionally biased toward acidic residues; sequence EEEDEDEEDELELEDEEDDEKDL. Over residues 71-86 the composition is skewed to basic and acidic residues; sequence EEMRRNEEEERREETR. The Nuclear localization signal signature appears at 73 to 80; it reads MRRNEEEE. Over residues 87-96 the composition is skewed to basic residues; it reads TRRRRGRKPK. The span at 113–127 shows a compositional bias: acidic residues; that stretch reads SDEEEEEEVREEDST. The region spanning 157–275 is the BAH domain; the sequence is NTFELEDPVL…TVAKKLWNLT (119 aa). 3 disordered regions span residues 300–349, 493–512, and 587–675; these read ELPD…KPET, GLTPAEKTSEPEESRRLQMT, and LASP…ADHE. 3 stretches are compositionally biased toward basic and acidic residues: residues 333-346, 499-512, and 613-627; these read VSRDATGKSEHFVK, KTSEPEESRRLQMT, and KLEKQKSFTKPKPEE. Residues 372–518 enclose the TFIIS central domain; it reads YRDKWLDKLL…LQMTDARCER (147 aa).

As to expression, expressed constitutively.

The protein localises to the nucleus. Component of a grass-specific mechanism of vernalization, a process by which prolonged cold exposure provides competence to flower in daylengths longer than 12 hours. Negative regulator of flowering required for vernalization establishment by repressing VRN1 before vernalization and in the fall season. This chain is Protein REPRESSOR OF VERNALIZATION 1, found in Brachypodium distachyon (Purple false brome).